Reading from the N-terminus, the 587-residue chain is MGKSTKWLKNVLLGKKTSKSSGSKDKERVVSGKEVLVTSKVEESDVVSDLPSFEVAETNTVDRSGGMLETQNVGPEEISDDEIELPEGKSTDSQNVAPVQDHSLSDAERIQREIAATSVQAAFRGYLARRAFWALKGIIRLQALIRGHLVRRQAVATLFSVMGIVRLQAFARGREIRKSDIGVQVYRKCRLQLLQGNKLANPTDAYLGIKKLTANAFAQKLLASSPKVLPVHAYDTSNPNSNLIWLENWSASCFWKPVPQPKKTISRKPQNRLLVEAESAKPKKSVRKVPASNFESSSVQTSFEFEKPKRSFRKVSSQSIEPPAVEDPQIELEKVKRSLRKVHNPVVESSIQPQRSPRKEVEKPKLGVEKTRESSYPLVHETAEEPVNVCDEKKKQEISEQPEEEVHALEMEVHTPGPLETNEALDSSLVNQIDSNEKAMVEEKPSMEKDTKEEKTPKPNNKENSAGKENQKSRKKGSATSKTEREESNGHHETSPSIPSYMQATKSAKAKLRLQGSPKSAEQDGTEKATVPRRHSLPSPGNGRITSHSPRTTRLANSGDKTGNKKEKPLLSSREGNAKTTPAERKR.

Residues 57-80 are disordered; sequence ETNTVDRSGGMLETQNVGPEEISD. Ser79 carries the post-translational modification Phosphoserine. 3 consecutive IQ domains span residues 112–140, 141–163, and 164–188; these read REIA…GIIR, LQAL…SVMG, and IVRL…VYRK. Residues 149–159 are calmodulin-binding; sequence LVRRQAVATLF. The Nuclear localization signal signature appears at 176 to 183; that stretch reads IRKSDIGV. The segment at 344–587 is disordered; the sequence is NPVVESSIQP…AKTTPAERKR (244 aa). Composition is skewed to basic and acidic residues over residues 357 to 373 and 390 to 413; these read PRKE…KTRE and CDEK…EMEV. Over residues 424 to 434 the composition is skewed to polar residues; the sequence is ALDSSLVNQID. Basic and acidic residues-rich tracts occupy residues 435-472 and 482-494; these read SNEK…ENQK and KTER…HHET. Composition is skewed to polar residues over residues 495-506 and 544-561; these read SPSIPSYMQATK and RITS…SGDK.

This sequence belongs to the IQD family. Binds to multiple calmodulin (CaM) in the presence of Ca(2+) and CaM-like proteins.

It is found in the nucleus. The protein localises to the nucleus envelope. It localises to the cytoplasm. The protein resides in the cytoskeleton. Its subcellular location is the cell membrane. Its function is as follows. May be involved in cooperative interactions with calmodulins or calmodulin-like proteins. Recruits calmodulin proteins to microtubules, thus being a potential scaffold in cellular signaling and trafficking. May associate with nucleic acids and regulate gene expression at the transcriptional or post-transcriptional level. This Arabidopsis thaliana (Mouse-ear cress) protein is Protein IQ-DOMAIN 31.